The sequence spans 344 residues: Dihydroorotate dehydrogenase (quinone) (344 aa).

FMN-binding positions include 61-65 (AGLDK) and T85. K65 provides a ligand contact to substrate. 110–114 (NRMGF) contacts substrate. Residues N138 and N171 each contribute to the FMN site. N171 serves as a coordination point for substrate. The Nucleophile role is filled by S174. N176 serves as a coordination point for substrate. FMN-binding residues include K216 and T244. 245–246 (NT) lines the substrate pocket. FMN is bound by residues G267, G296, and 317–318 (YS).

It belongs to the dihydroorotate dehydrogenase family. Type 2 subfamily. In terms of assembly, monomer. The cofactor is FMN.

It localises to the cell membrane. It carries out the reaction (S)-dihydroorotate + a quinone = orotate + a quinol. The protein operates within pyrimidine metabolism; UMP biosynthesis via de novo pathway; orotate from (S)-dihydroorotate (quinone route): step 1/1. Catalyzes the conversion of dihydroorotate to orotate with quinone as electron acceptor. This chain is Dihydroorotate dehydrogenase (quinone), found in Psychrobacter arcticus (strain DSM 17307 / VKM B-2377 / 273-4).